Reading from the N-terminus, the 92-residue chain is Large ribosomal subunit protein bL34m (92 aa).

A mitochondrion-targeting transit peptide spans 1-46 (MAFLARCFGCQACRSVALLSGRYLQSRVWMGLPDSWPLLSLQQARG). S71 bears the Phosphoserine mark.

It belongs to the bacterial ribosomal protein bL34 family. In terms of assembly, component of the mitochondrial ribosome large subunit (39S) which comprises a 16S rRNA and about 50 distinct proteins.

It is found in the mitochondrion. This Mus musculus (Mouse) protein is Large ribosomal subunit protein bL34m (Mrpl34).